Here is a 350-residue protein sequence, read N- to C-terminus: MSQSAVSFQINSVSKVQEQLIQQKINLKTKPLGALGQLESLALQIARIQGADQPYIANPTMLVFAGDHGIAAEGVSIAPSEVTRQMVQNFAHGGAAINVFCRQVGFKLEVIDCGILTPIEGVKGIIDQRLGAGTGAIHLEPAMALETVDKGFAMARDLIERHHQAGCNLVAFGEMGIGNTSAASAIMAAIMQLDVIDCVGRGTGINQETLARKLMLIELALLLHQSALTGPKEVLACLGGFEIVQMTGAMLAAAERNMLVVVDGFIATAAALVAVTIAPNVRDYLIFAHQSDEQGHLRMLEFLQAKPLLSLGLRLGEGTGAALALPLIQAAVNFYNQMASFSDAGIEAVV.

Glu317 (proton acceptor) is an active-site residue.

The protein belongs to the CobT family.

It catalyses the reaction 5,6-dimethylbenzimidazole + nicotinate beta-D-ribonucleotide = alpha-ribazole 5'-phosphate + nicotinate + H(+). It participates in nucleoside biosynthesis; alpha-ribazole biosynthesis; alpha-ribazole from 5,6-dimethylbenzimidazole: step 1/2. Catalyzes the synthesis of alpha-ribazole-5'-phosphate from nicotinate mononucleotide (NAMN) and 5,6-dimethylbenzimidazole (DMB). This Shewanella putrefaciens (strain CN-32 / ATCC BAA-453) protein is Nicotinate-nucleotide--dimethylbenzimidazole phosphoribosyltransferase.